The following is an 89-amino-acid chain: MSLSKEFKEEIITKFGGTDKNTGKAEVQVALFSNRISDLTGHLQKHPKDKHSRRGLLMLVSKRKKALKYLQNVAIDRYRQVIADLDLRK.

It belongs to the universal ribosomal protein uS15 family. In terms of assembly, part of the 30S ribosomal subunit. Forms a bridge to the 50S subunit in the 70S ribosome, contacting the 23S rRNA.

In terms of biological role, one of the primary rRNA binding proteins, it binds directly to 16S rRNA where it helps nucleate assembly of the platform of the 30S subunit by binding and bridging several RNA helices of the 16S rRNA. Forms an intersubunit bridge (bridge B4) with the 23S rRNA of the 50S subunit in the ribosome. This is Small ribosomal subunit protein uS15 from Chlorobium phaeovibrioides (strain DSM 265 / 1930) (Prosthecochloris vibrioformis (strain DSM 265)).